A 244-amino-acid polypeptide reads, in one-letter code: 7-cyano-7-deazaguanine synthase (244 aa).

17-27 (FSGGQDSTTCL) contacts ATP. Residues cysteine 205, cysteine 220, cysteine 223, and cysteine 226 each contribute to the Zn(2+) site.

The protein belongs to the QueC family. Requires Zn(2+) as cofactor.

It catalyses the reaction 7-carboxy-7-deazaguanine + NH4(+) + ATP = 7-cyano-7-deazaguanine + ADP + phosphate + H2O + H(+). It functions in the pathway purine metabolism; 7-cyano-7-deazaguanine biosynthesis. Catalyzes the ATP-dependent conversion of 7-carboxy-7-deazaguanine (CDG) to 7-cyano-7-deazaguanine (preQ(0)). This is 7-cyano-7-deazaguanine synthase from Bordetella parapertussis (strain 12822 / ATCC BAA-587 / NCTC 13253).